Reading from the N-terminus, the 363-residue chain is MNKRKILVPLGEKSYEVTLEAGILNNISEELLKIGITKKRKILVISNEEISNLYGKKFLNNLKDNKFQAKMFLIKAGESYKNLKTLSEIYDVAFEFGLDRNSIIIALGGGIVGDVSGFAAATWLRGIEYIQIPTTLLSMVDSSVGGKTGVNHPKGKNLIGAFNQPKAVFIDPETLKSLPKREFSAGMAEVIKYGVIRDKELFEYLEIDKNKNELINLKNEYLIKIINSSIKTKSHVVSQDEHENGVRAILNYGHSFGHVIENLCGYGKFLHGEAISIGMNIAGKIAIEKGLWSKEELERQRVLLESYDLPTEIPKINKEDVLTILMGDKKVRDGKMRFILPKEIGAVDIYDDVEDSLFLKFFS.

NAD(+)-binding positions include 134-135, Lys147, and Lys156; that span reads TT. The Zn(2+) site is built by Glu189, His254, and His271.

Belongs to the sugar phosphate cyclases superfamily. Dehydroquinate synthase family. Co(2+) is required as a cofactor. The cofactor is Zn(2+). NAD(+) serves as cofactor.

The protein localises to the cytoplasm. It catalyses the reaction 7-phospho-2-dehydro-3-deoxy-D-arabino-heptonate = 3-dehydroquinate + phosphate. It participates in metabolic intermediate biosynthesis; chorismate biosynthesis; chorismate from D-erythrose 4-phosphate and phosphoenolpyruvate: step 2/7. Catalyzes the conversion of 3-deoxy-D-arabino-heptulosonate 7-phosphate (DAHP) to dehydroquinate (DHQ). This Prochlorococcus marinus (strain MIT 9215) protein is 3-dehydroquinate synthase.